We begin with the raw amino-acid sequence, 381 residues long: MRKQLPVICVAAGIVLLAACTNDGGQQQTTVAPQPAVCNGPTVEISGAEPRYEPLNPTANQDYQRDGKSYKIVQDPSRFSQAGLAAIYDAEPGSNLTASGEMFDPMQLTAAHPTLPIPSYARITNLANGRMIVVRINDRGPYGTDRVISLSRAAADRLNTSNNTKVRIDPIIVAPDGSLSGPGMACTTVAKQTYALPPRPDLSGGMGSASSAPAQPQGDVLPVSNSTLKSDDTTGAPVSSSGFLGAPTTLAPGVLESNEPTPAPQPAPVSAPVAAPATAPATATPVSAPAAAAPVSAPVSAPAAAASGRFVVQVGAVSDQTRAQQYQQRLSQQFSVPGRVIQNGAVWRIQLGPFASKAEASALQQRLQTEAQLQSFIASAQ.

The signal sequence occupies residues Met-1 to Ala-19. Cys-20 carries the N-palmitoyl cysteine lipid modification. Residue Cys-20 is the site of S-diacylglycerol cysteine attachment. The interval Leu-196–Ala-274 is disordered. Residues Ser-208 to Gly-218 are compositionally biased toward low complexity. An SPOR domain is found at Ala-304 to Ala-380.

It belongs to the RlpA family.

Its subcellular location is the cell membrane. In terms of biological role, lytic transglycosylase with a strong preference for naked glycan strands that lack stem peptides. The protein is Endolytic peptidoglycan transglycosylase RlpA of Salmonella typhimurium (strain LT2 / SGSC1412 / ATCC 700720).